A 31-amino-acid chain; its full sequence is MESFAYILILAFSIGTLFFAIALRDPPKIGK.

Residues Ser3–Leu23 traverse the membrane as a helical segment.

The protein belongs to the PsbT family. PSII is composed of 1 copy each of membrane proteins PsbA, PsbB, PsbC, PsbD, PsbE, PsbF, PsbH, PsbI, PsbJ, PsbK, PsbL, PsbM, PsbT, PsbX, PsbY, PsbZ, Psb30/Ycf12, peripheral proteins PsbO, CyanoQ (PsbQ), PsbU, PsbV and a large number of cofactors. It forms dimeric complexes.

The protein localises to the cellular thylakoid membrane. In terms of biological role, found at the monomer-monomer interface of the photosystem II (PS II) dimer, plays a role in assembly and dimerization of PSII. PSII is a light-driven water plastoquinone oxidoreductase, using light energy to abstract electrons from H(2)O, generating a proton gradient subsequently used for ATP formation. The polypeptide is Photosystem II reaction center protein T (Synechococcus sp. (strain RCC307)).